Consider the following 326-residue polypeptide: Microtubule-associated protein RP/EB family member 2 (326 aa).

At Ser9 the chain carries Phosphoserine. One can recognise a Calponin-homology (CH) domain in the interval 56–158 (TMSRHDIIAW…FIQWFKKFYD (103 aa)). Position 166 is a phosphotyrosine (Tyr166). Disordered stretches follow at residues 170–239 (EARQ…DKDL) and 297–326 (YASDEQEGQTEEPEVEEQTHDQQPQQQEEY). The tract at residues 186-326 (QIFNLPKKSH…DQQPQQQEEY (141 aa)) is DCTN1-binding. Positions 199 to 233 (SPTAGAAKSSPAAKPGSTPSRPSSAKRASSSGSAS) are enriched in low complexity. Phosphoserine occurs at positions 218 and 235. Positions 235–305 (SDKDLETQVI…LYASDEQEGQ (71 aa)) constitute an EB1 C-terminal domain. The interval 258–301 (EGVEKERDFYFGKLREIELLCQEHGQENDDLVQRLMEVLYASDE) is APC-binding. Over residues 300 to 312 (DEQEGQTEEPEVE) the composition is skewed to acidic residues. The segment covering 317-326 (DQQPQQQEEY) has biased composition (low complexity).

Belongs to the MAPRE family. As to quaternary structure, interacts with DCTN1. Interacts with APC (via C-terminal). Interacts with monomeric and polymerized tubulin. Interacts with SLAIN1. Interacts (via the N-terminal region) with BAG1. Interacts with ASB14. Interacts with HAX1; this interaction is essential for epidermal cell migration. Post-translationally, phosphorylated at Ser-235 by CK2 leading to enhanced cell adhesion. Phosphorylated by CDK1 and AURKB during mitosis reduces the binding affinity of MAPRE2 for microtubules. In terms of processing, ubiquitinated in an ASB14-dependent manner; leading to proteasomal degradation.

The protein resides in the cytoplasm. The protein localises to the cytoskeleton. In terms of biological role, adapter protein that is involved in microtubule polymerization, and spindle function by stabilizing microtubules and anchoring them at centrosomes. Therefore, ensures mitotic progression and genome stability. Acts as a central regulator of microtubule reorganization in apico-basal epithelial differentiation. Plays a role during oocyte meiosis by regulating microtubule dynamics. Participates in neurite growth by interacting with plexin B3/PLXNB3 and microtubule reorganization during apico-basal epithelial differentiation. Also plays an essential role for cell migration and focal adhesion dynamics. Mechanistically, recruits HAX1 to microtubules in order to regulate focal adhesion dynamics. The protein is Microtubule-associated protein RP/EB family member 2 (Mapre2) of Rattus norvegicus (Rat).